Consider the following 660-residue polypeptide: Oligopeptide-binding protein AliA (660 aa).

The signal sequence occupies residues 1–22 (MKSSKLFALAGVTLLAATTLAA). Cys-23 is lipidated: N-palmitoyl cysteine. The S-diacylglycerol cysteine moiety is linked to residue Cys-23. Residues 638-660 (EKWMKEKEESNKKAQEDLAKHVK) form a disordered region.

This sequence belongs to the bacterial solute-binding protein 5 family.

The protein localises to the cell membrane. Functionally, part of the binding-protein-dependent transport system for oligopeptides; probably an oligopeptide binding protein. The polypeptide is Oligopeptide-binding protein AliA (aliA) (Streptococcus pneumoniae serotype 4 (strain ATCC BAA-334 / TIGR4)).